Consider the following 498-residue polypeptide: RuvB-like helicase 2 (498 aa).

An ATP-binding site is contributed by 79–86 (GPPSTGKT). The segment at 458-498 (VTIGQESTDGSTQPQAKQQEVAQPEATQPQSQPEDDKMETD) is disordered. Positions 461 to 489 (GQESTDGSTQPQAKQQEVAQPEATQPQSQ) are enriched in polar residues.

It belongs to the RuvB family. As to quaternary structure, may form heterododecamers with RVB1. Component of the SWR1 chromatin remodeling complex, the INO80 chromatin remodeling complex, and of the R2TP complex.

The protein resides in the nucleus. The catalysed reaction is ATP + H2O = ADP + phosphate + H(+). Functionally, DNA helicase which participates in several chromatin remodeling complexes, including the SWR1 and the INO80 complexes. The SWR1 complex mediates the ATP-dependent exchange of histone H2A for the H2A variant HZT1 leading to transcriptional regulation of selected genes by chromatin remodeling. The INO80 complex remodels chromatin by shifting nucleosomes and is involved in DNA repair. Also involved in pre-rRNA processing. This chain is RuvB-like helicase 2 (RVB2), found in Candida albicans (strain SC5314 / ATCC MYA-2876) (Yeast).